Here is a 426-residue protein sequence, read N- to C-terminus: F-box protein At2g15640 (426 aa).

The F-box domain maps to 1 to 48 (MNPSTITNDLTVEILSRLPAKSVARFHCVSKQWGSIFGSPYFKELFLT).

This is F-box protein At2g15640 from Arabidopsis thaliana (Mouse-ear cress).